The chain runs to 240 residues: UDP-2,3-diacylglucosamine hydrolase (240 aa).

Residues D8, H10, D41, N79, and H114 each contribute to the Mn(2+) site. 79 to 80 (NR) is a binding site for substrate. The substrate site is built by D122, S160, N164, K167, and H195. H195 and H197 together coordinate Mn(2+).

Belongs to the LpxH family. The cofactor is Mn(2+).

The protein localises to the cell inner membrane. It carries out the reaction UDP-2-N,3-O-bis[(3R)-3-hydroxytetradecanoyl]-alpha-D-glucosamine + H2O = 2-N,3-O-bis[(3R)-3-hydroxytetradecanoyl]-alpha-D-glucosaminyl 1-phosphate + UMP + 2 H(+). Its pathway is glycolipid biosynthesis; lipid IV(A) biosynthesis; lipid IV(A) from (3R)-3-hydroxytetradecanoyl-[acyl-carrier-protein] and UDP-N-acetyl-alpha-D-glucosamine: step 4/6. Functionally, hydrolyzes the pyrophosphate bond of UDP-2,3-diacylglucosamine to yield 2,3-diacylglucosamine 1-phosphate (lipid X) and UMP by catalyzing the attack of water at the alpha-P atom. Involved in the biosynthesis of lipid A, a phosphorylated glycolipid that anchors the lipopolysaccharide to the outer membrane of the cell. This is UDP-2,3-diacylglucosamine hydrolase from Salmonella schwarzengrund (strain CVM19633).